Reading from the N-terminus, the 416-residue chain is Serine hydroxymethyltransferase (416 aa).

(6S)-5,6,7,8-tetrahydrofolate contacts are provided by residues Leu117 and 121 to 123 (GHL). Lys226 carries the post-translational modification N6-(pyridoxal phosphate)lysine. Glu242 contacts (6S)-5,6,7,8-tetrahydrofolate.

It belongs to the SHMT family. As to quaternary structure, homodimer. Requires pyridoxal 5'-phosphate as cofactor.

It localises to the cytoplasm. The catalysed reaction is (6R)-5,10-methylene-5,6,7,8-tetrahydrofolate + glycine + H2O = (6S)-5,6,7,8-tetrahydrofolate + L-serine. It functions in the pathway one-carbon metabolism; tetrahydrofolate interconversion. Its pathway is amino-acid biosynthesis; glycine biosynthesis; glycine from L-serine: step 1/1. Functionally, catalyzes the reversible interconversion of serine and glycine with tetrahydrofolate (THF) serving as the one-carbon carrier. This reaction serves as the major source of one-carbon groups required for the biosynthesis of purines, thymidylate, methionine, and other important biomolecules. Also exhibits THF-independent aldolase activity toward beta-hydroxyamino acids, producing glycine and aldehydes, via a retro-aldol mechanism. The sequence is that of Serine hydroxymethyltransferase from Endomicrobium trichonymphae.